Consider the following 310-residue polypeptide: Cytosolic Fe-S cluster assembly factor Nubp1 homolog (310 aa).

Positions 9, 23, 26, and 32 each coordinate [4Fe-4S] cluster. 63–70 contributes to the ATP binding site; sequence GKGGVGKS. 2 residues coordinate [4Fe-4S] cluster: cysteine 240 and cysteine 243.

It belongs to the Mrp/NBP35 ATP-binding proteins family. NUBP1/NBP35 subfamily. As to quaternary structure, heterotetramer of 2 Nubp1 and 2 Nubp2 chains. It depends on [4Fe-4S] cluster as a cofactor.

The protein resides in the cytoplasm. Its function is as follows. Component of the cytosolic iron-sulfur (Fe/S) protein assembly (CIA) machinery. Required for maturation of extramitochondrial Fe-S proteins. The Nubp1-Nubp2 heterotetramer forms a Fe-S scaffold complex, mediating the de novo assembly of an Fe-S cluster and its transfer to target apoproteins. The sequence is that of Cytosolic Fe-S cluster assembly factor Nubp1 homolog from Drosophila mojavensis (Fruit fly).